Reading from the N-terminus, the 713-residue chain is Low-density lipoprotein receptor-related protein 10 (713 aa).

The signal sequence occupies residues 1–16 (MLLATLLLLLLGGALA). Residues 17-440 (HPDRIIFPNH…WDCSYVLPRK (424 aa)) lie on the Extracellular side of the membrane. Cystine bridges form between Cys-28–Cys-57 and Cys-80–Cys-98. The region spanning 28–136 (CEDPPAVLLE…QGFLLSYSQD (109 aa)) is the CUB 1 domain. The N-linked (GlcNAc...) asparagine glycan is linked to Asn-56. Asn-111 is a glycosylation site (N-linked (GlcNAc...) asparagine). The 37-residue stretch at 139-175 (MCLQEEFQCLNHRCVSAVQRCDGVDACGDGSDEAGCS) folds into the LDL-receptor class A 1 domain. Disulfide bonds link Cys-140-Cys-152, Cys-147-Cys-165, Cys-159-Cys-174, and Cys-192-Cys-220. Positions 192-305 (CNVTLEDFYG…RGFNATYHVR (114 aa)) constitute a CUB 2 domain. 2 N-linked (GlcNAc...) asparagine glycosylation sites follow: Asn-193 and Asn-299. LDL-receptor class A domains lie at 307–354 (YCLP…EDCP), 355–397 (GCPP…RRCR), and 398–434 (HCQP…WDCS). 9 cysteine pairs are disulfide-bonded: Cys-308–Cys-331, Cys-315–Cys-344, Cys-338–Cys-353, Cys-356–Cys-374, Cys-363–Cys-387, Cys-381–Cys-396, Cys-399–Cys-411, Cys-406–Cys-424, and Cys-418–Cys-433. The helical transmembrane segment at 441-461 (VITAAVIGSLVCGLLLVIALG) threads the bilayer. Residues 462–713 (CTCKLYAIRT…AEAEDEPLLT (252 aa)) lie on the Cytoplasmic side of the membrane. Positions 564-637 (GLLPRTNTPA…SPAPTTVPEA (74 aa)) are disordered. A compositionally biased stretch (polar residues) spans 569 to 584 (TNTPARASEARSQVTP). Position 596 is a phosphothreonine (Thr-596). Low complexity predominate over residues 621-636 (PLPSASTSPAPTTVPE).

This sequence belongs to the LDLR family. As to expression, expressed in blood leukocyte, lung, placenta, small intestine, liver, kidney, spleen, thymus, colon, skeletal muscle and heart.

It localises to the membrane. Its subcellular location is the coated pit. In terms of biological role, probable receptor, which is involved in the internalization of lipophilic molecules and/or signal transduction. May be involved in the uptake of lipoprotein APOE in liver. In Homo sapiens (Human), this protein is Low-density lipoprotein receptor-related protein 10 (LRP10).